The sequence spans 190 residues: Nascent polypeptide-associated complex subunit alpha (190 aa).

Disordered regions lie at residues 20–42 (FDSDDAGADVHASDKVASRAERK) and 123–155 (SLQNSSASGAEKKVEEEEEDDDSPIDEEGVDAK). The segment covering 30–40 (HASDKVASRAE) has biased composition (basic and acidic residues). Positions 37–102 (SRAERKSRKA…AKAEDMSQLA (66 aa)) constitute an NAC-A/B domain. The segment covering 138–151 (EEEEDDDSPIDEEG) has biased composition (acidic residues). The 38-residue stretch at 152–189 (VDAKDIDLVMQQVSCSRRKAVKALKESNGDLINAIMNA) folds into the UBA domain.

It belongs to the NAC-alpha family. In terms of assembly, part of the nascent polypeptide-associated complex (NAC), consisting of EGD2 and EGD1. NAC associates with ribosomes via EGD1.

Its subcellular location is the cytoplasm. The protein resides in the nucleus. Component of the nascent polypeptide-associated complex (NAC), a dynamic component of the ribosomal exit tunnel, protecting the emerging polypeptides from interaction with other cytoplasmic proteins to ensure appropriate nascent protein targeting. The NAC complex also promotes mitochondrial protein import by enhancing productive ribosome interactions with the outer mitochondrial membrane and blocks the inappropriate interaction of ribosomes translating non-secretory nascent polypeptides with translocation sites in the membrane of the endoplasmic reticulum. EGD2 may also be involved in transcription regulation. This Mycosarcoma maydis (Corn smut fungus) protein is Nascent polypeptide-associated complex subunit alpha (EGD2).